Consider the following 273-residue polypeptide: Dermonecrotic toxin LspiSicTox-betaIE1ii (273 aa).

Residue His5 is part of the active site. The Mg(2+) site is built by Glu25 and Asp27. Residue His41 is the Nucleophile of the active site. Cystine bridges form between Cys45–Cys51 and Cys47–Cys189. Residue Asp85 coordinates Mg(2+).

Belongs to the arthropod phospholipase D family. Class II subfamily. It depends on Mg(2+) as a cofactor. As to expression, expressed by the venom gland.

Its subcellular location is the secreted. The catalysed reaction is an N-(acyl)-sphingosylphosphocholine = an N-(acyl)-sphingosyl-1,3-cyclic phosphate + choline. It catalyses the reaction an N-(acyl)-sphingosylphosphoethanolamine = an N-(acyl)-sphingosyl-1,3-cyclic phosphate + ethanolamine. It carries out the reaction a 1-acyl-sn-glycero-3-phosphocholine = a 1-acyl-sn-glycero-2,3-cyclic phosphate + choline. The enzyme catalyses a 1-acyl-sn-glycero-3-phosphoethanolamine = a 1-acyl-sn-glycero-2,3-cyclic phosphate + ethanolamine. Functionally, dermonecrotic toxins cleave the phosphodiester linkage between the phosphate and headgroup of certain phospholipids (sphingolipid and lysolipid substrates), forming an alcohol (often choline) and a cyclic phosphate. This toxin acts on sphingomyelin (SM). It may also act on ceramide phosphoethanolamine (CPE), lysophosphatidylcholine (LPC) and lysophosphatidylethanolamine (LPE), but not on lysophosphatidylserine (LPS), and lysophosphatidylglycerol (LPG). It acts by transphosphatidylation, releasing exclusively cyclic phosphate products as second products. Induces dermonecrosis, hemolysis, increased vascular permeability, edema, inflammatory response, and platelet aggregation. The sequence is that of Dermonecrotic toxin LspiSicTox-betaIE1ii from Loxosceles spinulosa (Recluse spider).